The following is a 276-amino-acid chain: Protein MGF 360-15R (276 aa).

This sequence belongs to the asfivirus MGF 360 family.

In terms of biological role, plays a role in virus cell tropism, and may be required for efficient virus replication in macrophages. This chain is Protein MGF 360-15R, found in African swine fever virus (isolate Warthog/Namibia/Wart80/1980) (ASFV).